A 124-amino-acid polypeptide reads, in one-letter code: Fluoride-specific ion channel FluC (124 aa).

4 helical membrane passes run 4–24 (LLLV…ISIF), 35–55 (FGTL…YALG), 60–80 (ISPE…TTFS), and 102–122 (VVLN…LVFS). Na(+) is bound by residues Gly74 and Thr77.

The protein belongs to the fluoride channel Fluc/FEX (TC 1.A.43) family.

It localises to the cell inner membrane. It carries out the reaction fluoride(in) = fluoride(out). With respect to regulation, na(+) is not transported, but it plays an essential structural role and its presence is essential for fluoride channel function. Fluoride-specific ion channel. Important for reducing fluoride concentration in the cell, thus reducing its toxicity. The chain is Fluoride-specific ion channel FluC from Shewanella baltica (strain OS185).